The chain runs to 503 residues: MPCACNRNNWRKWIRPLLILLYALAILVTVPVCIWEFQKLKVGIHTKVWFIAGIFLLLTIPVSMCGILQHLVHYTQPELQKPIIRILWMVPIYSLDSWVALKYPKIAIYVDTWRECYEAYVIYNFMIFLTNYLTIRFPNLMLHLEAKDQQNHLPPLCCCPPWAMGEMLLFRCKLGVLQYTVVRPITTVTSLVCEILGVYDEGNFSFSNAWTYLVILNNLSQLFAMYCLLLFYKVLKEELSPIQPVGKFLCVKLVVFVSFWQAVLIALLVKVGVISEKRTWEWQSAEAVATGLQDFIICIEMFFAAIAHHYTFSYKPYVHEAEEGPCFDSFLAMWDVSDIREDISEQVRRVGRTMRGYPKKKCFPGDPDHNEHSSLLSASSQDSSKPSSPVGLYQGFGQTITSQSPISIANLYEEILNEIPEEQQRLYSGQDITMDIPEEQPRHDTGQDVVHLPYRQELPYKNHYQDHIQTVTSRYLLSSPKPSDDIVIDFSDSPEGSDSSTDS.

Helical transmembrane passes span 17–37 (LLIL…IWEF), 48–68 (VWFI…CGIL), 83–103 (IIRI…ALKY), 115–135 (ECYE…YLTI), 212–232 (YLVI…LLFY), 254–274 (VVFV…VGVI), and 287–307 (AVAT…AAIA). Disordered stretches follow at residues 358 to 391 (PKKK…SPVG) and 479 to 503 (SPKP…STDS). A compositionally biased stretch (low complexity) spans 373 to 388 (SSLLSASSQDSSKPSS). A compositionally biased stretch (polar residues) spans 494–503 (PEGSDSSTDS).

This sequence belongs to the TMEM184 family.

Its subcellular location is the membrane. Its function is as follows. Possible tumor suppressor which may play a role in cell growth. This chain is Transmembrane protein 184C (Tmem184c), found in Rattus norvegicus (Rat).